Here is a 424-residue protein sequence, read N- to C-terminus: MPAILDVHGREVLDSRGNPTVEAEVYLEDGSVGRAIVPSGASTGSREALELRDNDPKRYKGKGVLQAVKNINEIIAQELIGLEALNQYTVDKTMLELDGTENKSRLGANAILAVSLATARAAAASLGVPLYVYLGGVQARELPTPLMNVINGGKHADNPLDFQEYMIVPLASTFKESLRWAVEVFHTLRSILKSKGLNTNVGDEGGFAPYLEKNEDPLAILVEAIQKAGFEPGKDVALALDLAASEFYEDGKYILKAEGKELTSDEMISLLEYLCDKYPIVSIEDGLSEKDWDGWKKLTDKLGKRVQLVGDDIFVTNPQILAEGIEKGIANAILVKVNQIGSLTETLDTIRIAHQAGYRTVISHRSGETEDTFIADLAVAVNSGQIKTGSLSRTDRIAKYNQLLRIEEDLGEAALYRGILNFKR.

Q163 contributes to the (2R)-2-phosphoglycerate binding site. The Proton donor role is filled by E204. Mg(2+) is bound by residues D241, E284, and D311. 4 residues coordinate (2R)-2-phosphoglycerate: K336, R365, S366, and K387. The active-site Proton acceptor is K336.

This sequence belongs to the enolase family. Requires Mg(2+) as cofactor.

The protein localises to the cytoplasm. The protein resides in the secreted. Its subcellular location is the cell surface. It carries out the reaction (2R)-2-phosphoglycerate = phosphoenolpyruvate + H2O. The protein operates within carbohydrate degradation; glycolysis; pyruvate from D-glyceraldehyde 3-phosphate: step 4/5. Functionally, catalyzes the reversible conversion of 2-phosphoglycerate (2-PG) into phosphoenolpyruvate (PEP). It is essential for the degradation of carbohydrates via glycolysis. This Dictyoglomus turgidum (strain DSM 6724 / Z-1310) protein is Enolase.